We begin with the raw amino-acid sequence, 371 residues long: Queuine tRNA-ribosyltransferase (371 aa).

Asp-89 acts as the Proton acceptor in catalysis. Substrate is bound by residues 89 to 93 (DSGGF), Asp-143, Gln-185, and Gly-212. Positions 243 to 249 (GVGTPED) are RNA binding. The active-site Nucleophile is the Asp-262. An RNA binding; important for wobble base 34 recognition region spans residues 267-271 (TRNAR). Zn(2+) contacts are provided by Cys-300, Cys-302, Cys-305, and His-331.

This sequence belongs to the queuine tRNA-ribosyltransferase family. As to quaternary structure, homodimer. Within each dimer, one monomer is responsible for RNA recognition and catalysis, while the other monomer binds to the replacement base PreQ1. It depends on Zn(2+) as a cofactor.

It catalyses the reaction 7-aminomethyl-7-carbaguanine + guanosine(34) in tRNA = 7-aminomethyl-7-carbaguanosine(34) in tRNA + guanine. The protein operates within tRNA modification; tRNA-queuosine biosynthesis. Functionally, catalyzes the base-exchange of a guanine (G) residue with the queuine precursor 7-aminomethyl-7-deazaguanine (PreQ1) at position 34 (anticodon wobble position) in tRNAs with GU(N) anticodons (tRNA-Asp, -Asn, -His and -Tyr). Catalysis occurs through a double-displacement mechanism. The nucleophile active site attacks the C1' of nucleotide 34 to detach the guanine base from the RNA, forming a covalent enzyme-RNA intermediate. The proton acceptor active site deprotonates the incoming PreQ1, allowing a nucleophilic attack on the C1' of the ribose to form the product. After dissociation, two additional enzymatic reactions on the tRNA convert PreQ1 to queuine (Q), resulting in the hypermodified nucleoside queuosine (7-(((4,5-cis-dihydroxy-2-cyclopenten-1-yl)amino)methyl)-7-deazaguanosine). The polypeptide is Queuine tRNA-ribosyltransferase (Nitrosomonas europaea (strain ATCC 19718 / CIP 103999 / KCTC 2705 / NBRC 14298)).